A 740-amino-acid polypeptide reads, in one-letter code: Anaphase-promoting complex subunit 5 (740 aa).

S180 is subject to Phosphoserine. TPR repeat units follow at residues 194-234, 235-285, 286-322, 323-363, 364-403, 404-451, 452-485, 486-525, 526-565, 566-605, 606-645, 646-681, and 682-721; these read QKQA…FNPD, FAEA…GRSL, RYAALNLAALHCRFGHYQQAELALQEAIRIAQESNDH, VCLQ…YLAS, LGIQSLVQQRAFAGKTANKLMDALKDSDLLHWKHSLSELI, DISI…TESF, AVALCHLAELHAEQGCFAAAGEVLKHLKDRFPPN, SQHAQLWMLCDQKIQFDRAMNDGKFHLADSLVTGITALNG, IEGVYRKAVVLQAQNQMTEAHKLLQKLLTYCQKLKNTEMV, ISVLLSVAELYWRSSSPTIAMPVLLEALALSKEYRLQYLA, SETVLNLAYAQLILGIPEQALTLLHMAIEPILADGAVLDK, GRAMFLVSKCQVASAASYDPVKKAEALEAAIQNLSE, and AKNYFAQVDCRERIRDVAYFQARLYHALGKTQERNHCAMI. Phosphothreonine is present on T217.

This sequence belongs to the APC5 family. As to quaternary structure, the mammalian APC/C is composed at least of 14 distinct subunits ANAPC1, ANAPC2, CDC27/APC3, ANAPC4, ANAPC5, CDC16/APC6, ANAPC7, CDC23/APC8, ANAPC10, ANAPC11, CDC26/APC12, ANAPC13, ANAPC15 and ANAPC16 that assemble into a complex of at least 19 chains with a combined molecular mass of around 1.2 MDa; APC/C interacts with FZR1 and FBXO5.

The protein localises to the nucleus. Its subcellular location is the cytoplasm. The protein resides in the cytoskeleton. It is found in the spindle. It participates in protein modification; protein ubiquitination. In terms of biological role, component of the anaphase promoting complex/cyclosome (APC/C), a cell cycle-regulated E3 ubiquitin ligase that controls progression through mitosis and the G1 phase of the cell cycle. The APC/C complex acts by mediating ubiquitination and subsequent degradation of target proteins: it mainly mediates the formation of 'Lys-11'-linked polyubiquitin chains and, to a lower extent, the formation of 'Lys-48'- and 'Lys-63'-linked polyubiquitin chains. The APC/C complex catalyzes assembly of branched 'Lys-11'-/'Lys-48'-linked branched ubiquitin chains on target proteins. In Mus musculus (Mouse), this protein is Anaphase-promoting complex subunit 5 (Anapc5).